Here is a 350-residue protein sequence, read N- to C-terminus: Cytosolic sulfotransferase 18 (350 aa).

Residue Met1 is modified to N-acetylmethionine. A compositionally biased stretch (low complexity) spans 1–17; sequence MESETLTAKATITTTTL. The interval 1 to 28 is disordered; it reads MESETLTAKATITTTTLPSHDETKTEST. The span at 19–28 shows a compositional bias: basic and acidic residues; it reads SHDETKTEST. 93–98 contributes to the 3'-phosphoadenylyl sulfate binding site; sequence KTGTTW. The active-site Proton acceptor is the His155. 3'-phosphoadenylyl sulfate contacts are provided by residues Arg177, Ser185, Tyr243, and 313 to 315; that span reads RKG.

This sequence belongs to the sulfotransferase 1 family. Expressed in roots, leaves and stems. Barely detected in siliques and flowers.

It is found in the cytoplasm. It catalyses the reaction an aliphatic (Z)-desulfo-glucosinolate + 3'-phosphoadenylyl sulfate = a (Z)-omega-(methylsulfanyl)-N-sulfo-alkylhydroximate S-glucoside + adenosine 3',5'-bisphosphate + H(+). Its activity is regulated as follows. Inhibited by phosphoadenosine 5'-phosphate (PAP). Functionally, sulfotransferase that utilizes 3'-phospho-5'-adenylyl sulfate (PAPS) as sulfonate donor to catalyze the sulfate conjugation of desulfo-glucosinolates (dsGSs), the final step in the biosynthesis of the glucosinolate core structure. Preferred substrate are the long-chain desulfo-glucosinolates, 7-methylthioheptyl and 8-methylthiooctyl, derived from methionine. Substrate preference is desulfo-benzyl glucosinolate &gt; desulfo-4-methylthiobutyl glucosinolate &gt; desulfo-6-methylthiohexyl glucosinolate &gt; desulfo-3-methylthiopropyl glucosinolate &gt; desulfo-indol-3-yl methyl glucosinolate &gt; desulfo-singrin &gt; desulfo-3-butenyl glucosinolate. This Arabidopsis thaliana (Mouse-ear cress) protein is Cytosolic sulfotransferase 18 (SOT18).